Reading from the N-terminus, the 408-residue chain is LL-diaminopimelate aminotransferase (408 aa).

Residues Tyr15 and Gly42 each coordinate substrate. Residues Tyr72, 108–109 (SK), Tyr132, Asn187, Tyr218, and 246–248 (SFS) each bind pyridoxal 5'-phosphate. The substrate site is built by Lys109, Tyr132, and Asn187. An N6-(pyridoxal phosphate)lysine modification is found at Lys249. Pyridoxal 5'-phosphate contacts are provided by Arg257 and Asn292. Asn292 and Arg388 together coordinate substrate.

It belongs to the class-I pyridoxal-phosphate-dependent aminotransferase family. LL-diaminopimelate aminotransferase subfamily. In terms of assembly, homodimer. Requires pyridoxal 5'-phosphate as cofactor.

It catalyses the reaction (2S,6S)-2,6-diaminopimelate + 2-oxoglutarate = (S)-2,3,4,5-tetrahydrodipicolinate + L-glutamate + H2O + H(+). Its pathway is amino-acid biosynthesis; L-lysine biosynthesis via DAP pathway; LL-2,6-diaminopimelate from (S)-tetrahydrodipicolinate (aminotransferase route): step 1/1. Functionally, involved in the synthesis of meso-diaminopimelate (m-DAP or DL-DAP), required for both lysine and peptidoglycan biosynthesis. Catalyzes the direct conversion of tetrahydrodipicolinate to LL-diaminopimelate. The protein is LL-diaminopimelate aminotransferase of Leptospira borgpetersenii serovar Hardjo-bovis (strain L550).